The following is a 270-amino-acid chain: Putative [LysW]-aminoadipate/[LysW]-glutamate kinase (270 aa).

Residues 42–43, Arg-69, and Asn-177 each bind substrate; that span reads GG.

This sequence belongs to the acetylglutamate kinase family. LysZ subfamily.

It localises to the cytoplasm. It carries out the reaction [amino-group carrier protein]-C-terminal-N-(1,4-dicarboxybutan-1-yl)-L-glutamine + ATP = [amino-group carrier protein]-C-terminal-N-(1-carboxy-5-phosphooxy-5-oxopentan-1-yl)-L-glutamine + ADP. It catalyses the reaction [amino-group carrier protein]-C-terminal-gamma-(L-glutamyl)-L-glutamate + ATP = [amino-group carrier protein]-C-terminal-gamma-(5-phospho-L-glutamyl)-L-glutamate + ADP. The protein operates within amino-acid biosynthesis; L-lysine biosynthesis via AAA pathway; L-lysine from L-alpha-aminoadipate (Thermus route): step 2/5. It participates in amino-acid biosynthesis; L-arginine biosynthesis. Its function is as follows. Involved in both the arginine and lysine biosynthetic pathways. Phosphorylates the LysW-bound precursors glutamate (for arginine biosynthesis), respectively alpha-aminoadipate (for lysine biosynthesis). This is Putative [LysW]-aminoadipate/[LysW]-glutamate kinase from Aeropyrum pernix (strain ATCC 700893 / DSM 11879 / JCM 9820 / NBRC 100138 / K1).